A 323-amino-acid polypeptide reads, in one-letter code: Digestive cysteine proteinase 2 (323 aa).

The first 16 residues, 1 to 16, serve as a signal peptide directing secretion; the sequence is MKVAVLFLCGVALAAA. Positions 17-107 are cleaved as a propeptide — activation peptide; sequence SPSWEHFKGK…FYPKKETGPQ (91 aa). Intrachain disulfides connect Cys-128/Cys-171, Cys-162/Cys-204, and Cys-263/Cys-312. Residue Cys-131 is part of the active site. Residues His-270 and Asn-290 contribute to the active site.

Belongs to the peptidase C1 family.

Its activity is regulated as follows. Inhibited by E-64, antipain, leupeptin, heavy metal ions, iodoacetic acid, dithionitrobenzene, p-hydroxymercuri-benzoate; activated by mercaptoethanol and dithiothreitol. This is Digestive cysteine proteinase 2 (LCP2) from Homarus americanus (American lobster).